Consider the following 276-residue polypeptide: MPELPEVETVRRTLLQLVKNKTIADVDVGWPKMIKEPDDVERFIQLLKGQTIEDIGRRGKFLLFVLNDYVLVSHLRMEGRYGLYQPTDEKTKHTHVVFSFTDGSELRYADVRKFGTMHLFAKGAEHVAMPLAQLGVEPFSEQFTVELLEQAYAKTTRAIKTALLDQKTVVGLGNIYVDEALFHAGIHPERTASSLSKEEYHNLHKEIKRTLKEAIEAGGSSIKSYVNGQGEIGMFQQQLHVYGRKQQPCHHCDTAIEKTVVGGRGTHYCPNCQPRP.

Pro-2 functions as the Schiff-base intermediate with DNA in the catalytic mechanism. Glu-3 serves as the catalytic Proton donor. The Proton donor; for beta-elimination activity role is filled by Lys-60. Positions 93 and 112 each coordinate DNA. The FPG-type zinc-finger motif lies at 240–274; it reads HVYGRKQQPCHHCDTAIEKTVVGGRGTHYCPNCQP. The Proton donor; for delta-elimination activity role is filled by Arg-264.

This sequence belongs to the FPG family. In terms of assembly, monomer. Zn(2+) serves as cofactor.

It carries out the reaction Hydrolysis of DNA containing ring-opened 7-methylguanine residues, releasing 2,6-diamino-4-hydroxy-5-(N-methyl)formamidopyrimidine.. It catalyses the reaction 2'-deoxyribonucleotide-(2'-deoxyribose 5'-phosphate)-2'-deoxyribonucleotide-DNA = a 3'-end 2'-deoxyribonucleotide-(2,3-dehydro-2,3-deoxyribose 5'-phosphate)-DNA + a 5'-end 5'-phospho-2'-deoxyribonucleoside-DNA + H(+). Involved in base excision repair of DNA damaged by oxidation or by mutagenic agents. Acts as a DNA glycosylase that recognizes and removes damaged bases. Has a preference for oxidized purines, such as 7,8-dihydro-8-oxoguanine (8-oxoG). Has AP (apurinic/apyrimidinic) lyase activity and introduces nicks in the DNA strand. Cleaves the DNA backbone by beta-delta elimination to generate a single-strand break at the site of the removed base with both 3'- and 5'-phosphates. The protein is Formamidopyrimidine-DNA glycosylase of Shouchella clausii (strain KSM-K16) (Alkalihalobacillus clausii).